The primary structure comprises 160 residues: Putative 4-hydroxy-4-methyl-2-oxoglutarate aldolase (160 aa).

Substrate-binding positions include 76 to 79 (GGNL) and arginine 98. Aspartate 99 contacts a divalent metal cation.

Belongs to the class II aldolase/RraA-like family. In terms of assembly, homotrimer. The cofactor is a divalent metal cation.

It catalyses the reaction 4-hydroxy-4-methyl-2-oxoglutarate = 2 pyruvate. The enzyme catalyses oxaloacetate + H(+) = pyruvate + CO2. Catalyzes the aldol cleavage of 4-hydroxy-4-methyl-2-oxoglutarate (HMG) into 2 molecules of pyruvate. Also contains a secondary oxaloacetate (OAA) decarboxylase activity due to the common pyruvate enolate transition state formed following C-C bond cleavage in the retro-aldol and decarboxylation reactions. The protein is Putative 4-hydroxy-4-methyl-2-oxoglutarate aldolase of Deinococcus radiodurans (strain ATCC 13939 / DSM 20539 / JCM 16871 / CCUG 27074 / LMG 4051 / NBRC 15346 / NCIMB 9279 / VKM B-1422 / R1).